The chain runs to 292 residues: ATP synthase gamma chain (292 aa).

Belongs to the ATPase gamma chain family. F-type ATPases have 2 components, CF(1) - the catalytic core - and CF(0) - the membrane proton channel. CF(1) has five subunits: alpha(3), beta(3), gamma(1), delta(1), epsilon(1). CF(0) has three main subunits: a, b and c.

It localises to the cell inner membrane. Functionally, produces ATP from ADP in the presence of a proton gradient across the membrane. The gamma chain is believed to be important in regulating ATPase activity and the flow of protons through the CF(0) complex. In Syntrophobacter fumaroxidans (strain DSM 10017 / MPOB), this protein is ATP synthase gamma chain.